A 277-amino-acid chain; its full sequence is Small ribosomal subunit protein uS3 (277 aa).

One can recognise a KH type-2 domain in the interval 43-111 (IRELMSKGMD…QIQLNILEVK (69 aa)). The segment at 217-277 (AAQQAAAPSS…AEANNAEGGK (61 aa)) is disordered. Residues 245–258 (NDRNDRGGRRERDS) are compositionally biased toward basic and acidic residues. Low complexity predominate over residues 259 to 277 (AAAPQQNSAAEANNAEGGK).

It belongs to the universal ribosomal protein uS3 family. Part of the 30S ribosomal subunit. Forms a tight complex with proteins S10 and S14.

Binds the lower part of the 30S subunit head. Binds mRNA in the 70S ribosome, positioning it for translation. The chain is Small ribosomal subunit protein uS3 from Kocuria rhizophila (strain ATCC 9341 / DSM 348 / NBRC 103217 / DC2201).